Here is a 78-residue protein sequence, read N- to C-terminus: MRQSKKDYKLKIFNLVKVMKLRVVCKDENLTDDELCIKCELCIGKDLMTIIEMMNEEYKIDEIIIPNCETLKRILNMD.

This is an uncharacterized protein from Methanocaldococcus jannaschii (strain ATCC 43067 / DSM 2661 / JAL-1 / JCM 10045 / NBRC 100440) (Methanococcus jannaschii).